Here is a 248-residue protein sequence, read N- to C-terminus: 2,3-bisphosphoglycerate-dependent phosphoglycerate mutase (248 aa).

Substrate contacts are provided by residues Arg-10–Asn-17, Thr-23–Gly-24, Arg-62, Glu-89–Tyr-92, Lys-100, Arg-116–Arg-117, and Gly-183–Asn-184. Residue His-11 is the Tele-phosphohistidine intermediate of the active site. Glu-89 serves as the catalytic Proton donor/acceptor.

This sequence belongs to the phosphoglycerate mutase family. BPG-dependent PGAM subfamily.

The catalysed reaction is (2R)-2-phosphoglycerate = (2R)-3-phosphoglycerate. It participates in carbohydrate degradation; glycolysis; pyruvate from D-glyceraldehyde 3-phosphate: step 3/5. Its function is as follows. Catalyzes the interconversion of 2-phosphoglycerate and 3-phosphoglycerate. This chain is 2,3-bisphosphoglycerate-dependent phosphoglycerate mutase, found in Corynebacterium kroppenstedtii (strain DSM 44385 / JCM 11950 / CIP 105744 / CCUG 35717).